Here is a 134-residue protein sequence, read N- to C-terminus: uncharacterized protein (134 aa).

The HIT domain maps to 4–107; the sequence is IFTKIINREL…PTHSLSNFSF (104 aa). The Histidine triad motif signature appears at 91 to 95; sequence HLHIH.

This is an uncharacterized protein from Mycobacterium leprae (strain TN).